The sequence spans 301 residues: Ribonuclease Z (301 aa).

The Zn(2+) site is built by His61, His63, Asp65, His66, His140, Asp211, and His269. Asp65 (proton acceptor) is an active-site residue.

Belongs to the RNase Z family. Homodimer. It depends on Zn(2+) as a cofactor.

The catalysed reaction is Endonucleolytic cleavage of RNA, removing extra 3' nucleotides from tRNA precursor, generating 3' termini of tRNAs. A 3'-hydroxy group is left at the tRNA terminus and a 5'-phosphoryl group is left at the trailer molecule.. Zinc phosphodiesterase, which displays some tRNA 3'-processing endonuclease activity. Probably involved in tRNA maturation, by removing a 3'-trailer from precursor tRNA. This chain is Ribonuclease Z, found in Bradyrhizobium diazoefficiens (strain JCM 10833 / BCRC 13528 / IAM 13628 / NBRC 14792 / USDA 110).